A 149-amino-acid chain; its full sequence is Large ribosomal subunit protein bL9 (149 aa).

It belongs to the bacterial ribosomal protein bL9 family.

Its function is as follows. Binds to the 23S rRNA. This Klebsiella pneumoniae subsp. pneumoniae (strain ATCC 700721 / MGH 78578) protein is Large ribosomal subunit protein bL9.